A 515-amino-acid chain; its full sequence is Ent-isokaurene C2/C3-hydroxylase (515 aa).

The helical transmembrane segment at 5 to 25 threads the bilayer; the sequence is LILDLCLSALFVVVLSKLVSS. C452 provides a ligand contact to heme.

It belongs to the cytochrome P450 family. Heme is required as a cofactor.

Its subcellular location is the membrane. The enzyme catalyses ent-isokaurene + 2 reduced [NADPH--hemoprotein reductase] + 2 O2 = ent-isokaurene-2beta,3beta-diol + 2 oxidized [NADPH--hemoprotein reductase] + 2 H2O + 2 H(+). Its function is as follows. Enzyme of the diterpenoid metabolism involved in the biosynthesis of antibacterial oryzalides such as phytocassane. This Oryza sativa subsp. japonica (Rice) protein is Ent-isokaurene C2/C3-hydroxylase (CYP71Z6).